Reading from the N-terminus, the 409-residue chain is N-acetylglucosamine-6-phosphate deacetylase (409 aa).

Glu143 lines the a divalent metal cation pocket. 154 to 155 provides a ligand contact to substrate; it reads AH. The a divalent metal cation site is built by His211 and His232. Substrate-binding positions include 235-236, Arg243, and 269-272; these read NA and DGIH. Asp294 serves as the catalytic Proton donor/acceptor. Residue 328-330 coordinates substrate; it reads LSG.

It belongs to the metallo-dependent hydrolases superfamily. NagA family. It depends on a divalent metal cation as a cofactor.

The enzyme catalyses N-acetyl-D-glucosamine 6-phosphate + H2O = D-glucosamine 6-phosphate + acetate. It participates in amino-sugar metabolism; N-acetylneuraminate degradation. In terms of biological role, hydrolyzes the N-glycolyl group from N-glycolylglucosamine 6-phosphate (GlcNGc-6-P) in the N-glycolylneuraminic acid (Neu5Gc) degradation pathway. This Rattus norvegicus (Rat) protein is N-acetylglucosamine-6-phosphate deacetylase (Amdhd2).